Here is a 458-residue protein sequence, read N- to C-terminus: Bifunctional protein GlmU (458 aa).

The interval 1 to 229 (MNKFAIVLAA…FDESLGVNDR (229 aa)) is pyrophosphorylase. Residues 8 to 11 (LAAG), K22, Q72, and 77 to 78 (GT) contribute to the UDP-N-acetyl-alpha-D-glucosamine site. D102 contributes to the Mg(2+) binding site. UDP-N-acetyl-alpha-D-glucosamine is bound by residues G139, E154, N169, and N227. N227 is a binding site for Mg(2+). A linker region spans residues 230–250 (VALSQAEATMRKRINHEHMVN). The segment at 251 to 458 (GVTLIDPATT…AKKMPHYRGQ (208 aa)) is N-acetyltransferase. UDP-N-acetyl-alpha-D-glucosamine is bound by residues R332 and K350. Catalysis depends on H362, which acts as the Proton acceptor. Y365 and N376 together coordinate UDP-N-acetyl-alpha-D-glucosamine. Acetyl-CoA is bound by residues A379, S404, A422, and R439.

The protein in the N-terminal section; belongs to the N-acetylglucosamine-1-phosphate uridyltransferase family. In the C-terminal section; belongs to the transferase hexapeptide repeat family. As to quaternary structure, homotrimer. Requires Mg(2+) as cofactor.

The protein resides in the cytoplasm. The enzyme catalyses alpha-D-glucosamine 1-phosphate + acetyl-CoA = N-acetyl-alpha-D-glucosamine 1-phosphate + CoA + H(+). It carries out the reaction N-acetyl-alpha-D-glucosamine 1-phosphate + UTP + H(+) = UDP-N-acetyl-alpha-D-glucosamine + diphosphate. Its pathway is nucleotide-sugar biosynthesis; UDP-N-acetyl-alpha-D-glucosamine biosynthesis; N-acetyl-alpha-D-glucosamine 1-phosphate from alpha-D-glucosamine 6-phosphate (route II): step 2/2. The protein operates within nucleotide-sugar biosynthesis; UDP-N-acetyl-alpha-D-glucosamine biosynthesis; UDP-N-acetyl-alpha-D-glucosamine from N-acetyl-alpha-D-glucosamine 1-phosphate: step 1/1. It functions in the pathway bacterial outer membrane biogenesis; LPS lipid A biosynthesis. In terms of biological role, catalyzes the last two sequential reactions in the de novo biosynthetic pathway for UDP-N-acetylglucosamine (UDP-GlcNAc). The C-terminal domain catalyzes the transfer of acetyl group from acetyl coenzyme A to glucosamine-1-phosphate (GlcN-1-P) to produce N-acetylglucosamine-1-phosphate (GlcNAc-1-P), which is converted into UDP-GlcNAc by the transfer of uridine 5-monophosphate (from uridine 5-triphosphate), a reaction catalyzed by the N-terminal domain. The polypeptide is Bifunctional protein GlmU (Lactococcus lactis subsp. cremoris (strain MG1363)).